The sequence spans 538 residues: Serine/threonine-protein phosphatase 5 (538 aa).

TPR repeat units follow at residues 13 to 46, 48 to 80, and 81 to 114; these read AEEF…NSNN, VYWA…DSRY, and SKGY…SPND. A run of 2 helical transmembrane segments spans residues 163-183 and 185-205; these read SSMP…VVAV and GFAT…TFWW. Mn(2+) is bound by residues Asp-282, His-284, Asp-311, and Asn-343. The Proton donor role is filled by His-344. Residues His-392 and His-467 each contribute to the Mn(2+) site.

The protein belongs to the PPP phosphatase family. PP-5 (PP-T) subfamily. As to quaternary structure, interacts with PHYA and PHYB, mostly when they are phosphorylated and in Pfr forms. The cofactor is Mn(2+).

Its subcellular location is the endoplasmic reticulum membrane. The protein resides in the nucleus membrane. The protein localises to the cytoplasm. It is found in the nucleus. It localises to the nucleoplasm. Its subcellular location is the nucleus speckle. It carries out the reaction O-phospho-L-seryl-[protein] + H2O = L-seryl-[protein] + phosphate. The catalysed reaction is O-phospho-L-threonyl-[protein] + H2O = L-threonyl-[protein] + phosphate. Activated by arachidonic acid (AA). Isoform 2 dephosphorylates phosphorylated phytochromes, with a preference toward Pfr forms, and enhances phytochrome-mediated photoresponses, probably by enhancing their stability and their binding affinity for light signal transducers such as NDPK2. Can use para-nitrophenylphosphate (pNPP) as substrate. This is Serine/threonine-protein phosphatase 5 (PAPP5) from Arabidopsis thaliana (Mouse-ear cress).